The chain runs to 159 residues: 2-C-methyl-D-erythritol 2,4-cyclodiphosphate synthase (159 aa).

2 residues coordinate a divalent metal cation: aspartate 10 and histidine 12. 4-CDP-2-C-methyl-D-erythritol 2-phosphate contacts are provided by residues 10–12 (DVH) and 36–37 (HS). Histidine 44 serves as a coordination point for a divalent metal cation. Residues 58–60 (DIG), 63–67 (FPDTD), 102–108 (AQAPKMA), 134–137 (TTTE), phenylalanine 141, and arginine 144 each bind 4-CDP-2-C-methyl-D-erythritol 2-phosphate.

It belongs to the IspF family. In terms of assembly, homotrimer. A divalent metal cation serves as cofactor.

It catalyses the reaction 4-CDP-2-C-methyl-D-erythritol 2-phosphate = 2-C-methyl-D-erythritol 2,4-cyclic diphosphate + CMP. Its pathway is isoprenoid biosynthesis; isopentenyl diphosphate biosynthesis via DXP pathway; isopentenyl diphosphate from 1-deoxy-D-xylulose 5-phosphate: step 4/6. Its function is as follows. Involved in the biosynthesis of isopentenyl diphosphate (IPP) and dimethylallyl diphosphate (DMAPP), two major building blocks of isoprenoid compounds. Catalyzes the conversion of 4-diphosphocytidyl-2-C-methyl-D-erythritol 2-phosphate (CDP-ME2P) to 2-C-methyl-D-erythritol 2,4-cyclodiphosphate (ME-CPP) with a corresponding release of cytidine 5-monophosphate (CMP). This Shewanella frigidimarina (strain NCIMB 400) protein is 2-C-methyl-D-erythritol 2,4-cyclodiphosphate synthase.